Here is a 393-residue protein sequence, read N- to C-terminus: G protein-activated inward rectifier potassium channel 3 (393 aa).

The segment at 1-23 (MAQENAAFSPGQEEPPRRRGRQR) is disordered. The Cytoplasmic segment spans residues 1–57 (MAQENAAFSPGQEEPPRRRGRQRYVEKDGRCNVQQGNVRETYRYLTDLFTTLVDLQW). The chain crosses the membrane as a helical span at residues 58 to 82 (RLSLLFFVLAYALTWLFFGAIWWLI). At 83 to 106 (AYGRGDLEHLEDTAWTPCVNNLNG) the chain is on the extracellular side. The segment at residues 107–118 (FVAAFLFSIETE) is an intramembrane region (helical; Pore-forming). The segment at residues 119–125 (TTIGYGH) is an intramembrane region (pore-forming). The Selectivity filter signature appears at 120–125 (TIGYGH). Over 126–134 (RVITDQCPE) the chain is Extracellular. Residues 135–156 (GIVLLLLQAILGSMVNAFMVGC) traverse the membrane as a helical segment. The Cytoplasmic segment spans residues 157–393 (MFVKISQPNK…LPPPESESKV (237 aa)). Residues 360–393 (KVEEEGAGEGAGGEAGADKEQNGCLPPPESESKV) are disordered. The span at 384–393 (LPPPESESKV) shows a compositional bias: pro residues. A PDZ-binding motif is present at residues 390 to 393 (ESKV).

This sequence belongs to the inward rectifier-type potassium channel (TC 1.A.2.1) family. KCNJ9 subfamily. In terms of assembly, associates with KCNJ3/GIRK1 to form a G-protein-activated heteromultimer pore-forming unit. Interacts (via PDZ-binding motif) with SNX27 (via PDZ domain); the interaction is required when endocytosed to prevent degradation in lysosomes and promote recycling to the plasma membrane.

It localises to the membrane. The catalysed reaction is K(+)(in) = K(+)(out). In terms of biological role, inward rectifier potassium channels are characterized by a greater tendency to allow potassium to flow into the cell rather than out of it. Their voltage dependence is regulated by the concentration of extracellular potassium; as external potassium is raised, the voltage range of the channel opening shifts to more positive voltages. The inward rectification is mainly due to the blockage of outward current by internal magnesium, This receptor is controlled by G proteins. Unable to produce channel activity when expressed alone. Forms a functional channel in association with KCNJ3/GIRK1. The chain is G protein-activated inward rectifier potassium channel 3 (KCNJ9) from Homo sapiens (Human).